The sequence spans 806 residues: Glycerol-3-phosphate acyltransferase (806 aa).

Residues 305 to 310 (CHRSHM) carry the HXXXXD motif motif.

This sequence belongs to the GPAT/DAPAT family.

Its subcellular location is the cell inner membrane. It catalyses the reaction sn-glycerol 3-phosphate + an acyl-CoA = a 1-acyl-sn-glycero-3-phosphate + CoA. It functions in the pathway phospholipid metabolism; CDP-diacylglycerol biosynthesis; CDP-diacylglycerol from sn-glycerol 3-phosphate: step 1/3. This is Glycerol-3-phosphate acyltransferase from Salmonella arizonae (strain ATCC BAA-731 / CDC346-86 / RSK2980).